Here is a 186-residue protein sequence, read N- to C-terminus: Hydra actinoporin-like toxin 6 (186 aa).

The signal sequence occupies residues 1 to 21 (MLVYVCLVVILIQLPFGAAGG). The Cell attachment site motif lies at 158–160 (RAG).

Belongs to the actinoporin family. HALT subfamily. As to quaternary structure, octamer or nonamer in membranes. Monomer in the soluble state. In vitro, interacts with folate receptor alpha (of target organism). In terms of tissue distribution, expressed female germline during oogenesis.

It is found in the nematocyst. Its subcellular location is the secreted. It localises to the target cell membrane. Functionally, pore-forming protein that forms hydrophilic pores and causes cytolysis. Compared to equinatoxin-2 (AC P61914), it reveals lower cytolysis activity (5-12-fold difference, tested on erythrocytes), a larger pore size (probably 2-3 nm) and different affinity to membrane lipids (100-fold lower affinity to sphingomyelin). Binds to sulfatides. Shows cytolytic activity on HeLa cells, with a different potency than its paralogs (from most potent to less potent: HALT-4&gt;HALT-6~HALT-1&gt;HALT-3&gt;HALT-7&gt;HALT-2). Pore formation is a multi-step process that involves specific recognition of membrane lipid by a protein aromatic residues rich region, firm binding to the membrane (mainly driven by hydrophobic interactions) accompanied by the transfer of the N-terminal region to the lipid-water interface and finally pore formation after oligomerization of monomers. In vitro, binds to the folate receptor alpha (FOLR1), a GPI-anchored membrane protein that plays a major role in the uptake of folate/folic acid into cells via endocytosis, suggesting a possible involvement of this receptor in the mechanism of HALT-1-induced cell lysis. In vivo, does not cause visible paralysis in larvae of the blowfly Sarcophaga faculata, the most common arthropod prey of Hydra. This Hydra vulgaris (Hydra) protein is Hydra actinoporin-like toxin 6.